The sequence spans 83 residues: Small ribosomal subunit protein bS16 (83 aa).

The protein belongs to the bacterial ribosomal protein bS16 family.

This Pseudomonas aeruginosa (strain UCBPP-PA14) protein is Small ribosomal subunit protein bS16.